We begin with the raw amino-acid sequence, 537 residues long: Oviduct-specific glycoprotein (537 aa).

The signal sequence occupies residues 1–18 (LLLCVGLLLVLKHHDGAA). One can recognise a GH18 domain in the interval 19–382 (HKLVCYFTNW…HTLNNLLVND (364 aa)). Cys-23 and Cys-48 are joined by a disulfide. Chitin contacts are provided by residues 68–69 (PQ), 95–98 (GGWN), Tyr-139, 208–211 (LSYD), and Trp-352. Asn-399 carries an N-linked (GlcNAc...) asparagine glycan. 2 disordered regions span residues 446–475 (EIATPTRTPLSFGRHTAAPEGKTESPGEKP) and 498–537 (TGQKVTPPGRKAGVPEKVTTPSGKMTVTPDGRAETLERRL). The segment covering 528 to 537 (GRAETLERRL) has biased composition (basic and acidic residues).

Belongs to the glycosyl hydrolase 18 family. In terms of tissue distribution, oviduct.

It is found in the cytoplasmic vesicle. Its subcellular location is the secretory vesicle. Its function is as follows. Binds to oocyte zona pellucida in vivo. May play a role in the fertilization process and/or early embryonic development. This Bos taurus (Bovine) protein is Oviduct-specific glycoprotein (OVGP1).